The primary structure comprises 316 residues: Acetyl-coenzyme A carboxylase carboxyl transferase subunit alpha (316 aa).

The CoA carboxyltransferase C-terminal domain occupies 36–290 (LLEERLARLR…KEALLKALEE (255 aa)).

It belongs to the AccA family. As to quaternary structure, acetyl-CoA carboxylase is a heterohexamer composed of biotin carboxyl carrier protein (AccB), biotin carboxylase (AccC) and two subunits each of ACCase subunit alpha (AccA) and ACCase subunit beta (AccD).

The protein localises to the cytoplasm. The enzyme catalyses N(6)-carboxybiotinyl-L-lysyl-[protein] + acetyl-CoA = N(6)-biotinyl-L-lysyl-[protein] + malonyl-CoA. It participates in lipid metabolism; malonyl-CoA biosynthesis; malonyl-CoA from acetyl-CoA: step 1/1. In terms of biological role, component of the acetyl coenzyme A carboxylase (ACC) complex. First, biotin carboxylase catalyzes the carboxylation of biotin on its carrier protein (BCCP) and then the CO(2) group is transferred by the carboxyltransferase to acetyl-CoA to form malonyl-CoA. This chain is Acetyl-coenzyme A carboxylase carboxyl transferase subunit alpha, found in Thermus thermophilus (strain ATCC 27634 / DSM 579 / HB8).